The following is a 118-amino-acid chain: Large ribosomal subunit protein bL20c (118 aa).

It belongs to the bacterial ribosomal protein bL20 family.

It localises to the plastid. It is found in the chloroplast. In terms of biological role, binds directly to 23S ribosomal RNA and is necessary for the in vitro assembly process of the 50S ribosomal subunit. It is not involved in the protein synthesizing functions of that subunit. The protein is Large ribosomal subunit protein bL20c of Gracilaria tenuistipitata var. liui (Red alga).